We begin with the raw amino-acid sequence, 185 residues long: Peptidyl-tRNA hydrolase (185 aa).

Y14 lines the tRNA pocket. H19 acts as the Proton acceptor in catalysis. 3 residues coordinate tRNA: Y65, N67, and N113.

This sequence belongs to the PTH family. As to quaternary structure, monomer.

It localises to the cytoplasm. The enzyme catalyses an N-acyl-L-alpha-aminoacyl-tRNA + H2O = an N-acyl-L-amino acid + a tRNA + H(+). In terms of biological role, hydrolyzes ribosome-free peptidyl-tRNAs (with 1 or more amino acids incorporated), which drop off the ribosome during protein synthesis, or as a result of ribosome stalling. Its function is as follows. Catalyzes the release of premature peptidyl moieties from peptidyl-tRNA molecules trapped in stalled 50S ribosomal subunits, and thus maintains levels of free tRNAs and 50S ribosomes. The polypeptide is Peptidyl-tRNA hydrolase (Rickettsia bellii (strain OSU 85-389)).